The chain runs to 264 residues: Thiazole synthase (264 aa).

The active-site Schiff-base intermediate with DXP is the lysine 106. Residues glycine 167, 193 to 194, and 215 to 216 each bind 1-deoxy-D-xylulose 5-phosphate; these read AG and NT.

Belongs to the ThiG family. In terms of assembly, homotetramer. Forms heterodimers with either ThiH or ThiS.

The protein localises to the cytoplasm. It carries out the reaction [ThiS sulfur-carrier protein]-C-terminal-Gly-aminoethanethioate + 2-iminoacetate + 1-deoxy-D-xylulose 5-phosphate = [ThiS sulfur-carrier protein]-C-terminal Gly-Gly + 2-[(2R,5Z)-2-carboxy-4-methylthiazol-5(2H)-ylidene]ethyl phosphate + 2 H2O + H(+). The protein operates within cofactor biosynthesis; thiamine diphosphate biosynthesis. Its function is as follows. Catalyzes the rearrangement of 1-deoxy-D-xylulose 5-phosphate (DXP) to produce the thiazole phosphate moiety of thiamine. Sulfur is provided by the thiocarboxylate moiety of the carrier protein ThiS. In vitro, sulfur can be provided by H(2)S. This Xanthomonas oryzae pv. oryzae (strain MAFF 311018) protein is Thiazole synthase.